Here is a 150-residue protein sequence, read N- to C-terminus: Large ribosomal subunit protein bL9 (150 aa).

It belongs to the bacterial ribosomal protein bL9 family.

In terms of biological role, binds to the 23S rRNA. The protein is Large ribosomal subunit protein bL9 of Burkholderia multivorans (strain ATCC 17616 / 249).